The primary structure comprises 135 residues: Probable histone H2A.1 (135 aa).

It belongs to the histone H2A family. In terms of assembly, the nucleosome is a histone octamer containing two molecules each of H2A, H2B, H3 and H4 assembled in one H3-H4 heterotetramer and two H2A-H2B heterodimers. The octamer wraps approximately 147 bp of DNA.

The protein resides in the nucleus. It is found in the chromosome. Core component of nucleosome. Nucleosomes wrap and compact DNA into chromatin, limiting DNA accessibility to the cellular machineries which require DNA as a template. Histones thereby play a central role in transcription regulation, DNA repair, DNA replication and chromosomal stability. DNA accessibility is regulated via a complex set of post-translational modifications of histones, also called histone code, and nucleosome remodeling. The chain is Probable histone H2A.1 from Oryza sativa subsp. japonica (Rice).